A 433-amino-acid polypeptide reads, in one-letter code: Adenylosuccinate synthetase (433 aa).

GTP-binding positions include 12–18 (GDEGKGK) and 40–42 (GHT). The active-site Proton acceptor is the D13. Mg(2+)-binding residues include D13 and G40. IMP is bound by residues 13-16 (DEGK), 38-41 (NAGH), T130, R144, Q225, T240, and R304. The active-site Proton donor is the H41. 300–306 (ATTGRPR) is a binding site for substrate. GTP-binding positions include R306, 332 to 334 (KLD), and 414 to 416 (SIG).

This sequence belongs to the adenylosuccinate synthetase family. As to quaternary structure, homodimer. Requires Mg(2+) as cofactor.

It localises to the cytoplasm. It carries out the reaction IMP + L-aspartate + GTP = N(6)-(1,2-dicarboxyethyl)-AMP + GDP + phosphate + 2 H(+). It participates in purine metabolism; AMP biosynthesis via de novo pathway; AMP from IMP: step 1/2. Functionally, plays an important role in the de novo pathway of purine nucleotide biosynthesis. Catalyzes the first committed step in the biosynthesis of AMP from IMP. The sequence is that of Adenylosuccinate synthetase from Geobacter sulfurreducens (strain ATCC 51573 / DSM 12127 / PCA).